Reading from the N-terminus, the 557-residue chain is DNA ligase B (557 aa).

K125 serves as the catalytic N6-AMP-lysine intermediate.

Belongs to the NAD-dependent DNA ligase family. LigB subfamily.

The catalysed reaction is NAD(+) + (deoxyribonucleotide)n-3'-hydroxyl + 5'-phospho-(deoxyribonucleotide)m = (deoxyribonucleotide)n+m + AMP + beta-nicotinamide D-nucleotide.. In terms of biological role, catalyzes the formation of phosphodiester linkages between 5'-phosphoryl and 3'-hydroxyl groups in double-stranded DNA using NAD as a coenzyme and as the energy source for the reaction. The chain is DNA ligase B from Pseudomonas entomophila (strain L48).